A 610-amino-acid polypeptide reads, in one-letter code: MADPNKGINSLELNEGHSEWYVVTEAECINSLDTMEELFEESTDGSIVSNLIDDSEELEEGNSLALYNEQLTEDCNRAILALKRKLTKTPLKSQDRTVADLSPRLEAVTISPQRQSKRRLFEDSGLGEDEATNSIEKKVVSNSLESNESGTLVVETDSIFRSTNRKATLLAKFKEYFGVAYGDLTRPFKSDRSCCENWVISVCAAAEEVIEASKTVMQQHCDFLQVISYGFYALYLVKFKTAKSRDTIMKLFSLTLNVQEQQLMCDPPKSRSTPTALYFYRRSFGNASFIYGPFPDWLAKLTMLDHESAASSEQFELAQMIQFAYDNNLTTESEIAYKYALLADSDANAAAFLKSNQQVKYVRDCYAMLRYYKRQEMKDMSISEWIWKCCDDCNQEGNWKLIAQFLRYQEVNFISFLCALKTLFKGIPKRNCLVFWGPPDTGKSYICSSLTRFMQGKVVSFMNRHSQFWLQPLQDCKLGFLDDATFQCWQYMDVNMRNALDGNHISLDLKHKAPLQIKLPPLLITTNVDVENEASLMYLKSRLVFFKFPNKLPLKENDEVLYEITDASWKCFFIKFASHLELTARGDEQHESGRSDRAFRCTAGTNTESI.

The Nuclear localization signal signature appears at 83–85 (KRK). A phosphoserine; by host mark is found at S93 and S102. The Nuclear export signal signature appears at 101–110 (LSPRLEAVTI). Residues 148-312 (ESGTLVVETD…MLDHESAASS (165 aa)) form a DNA-binding region region. Residues 411–561 (VNFISFLCAL…LPLKENDEVL (151 aa)) form the SF3 helicase domain. 437–444 (GPPDTGKS) is an ATP binding site. K518 participates in a covalent cross-link: Glycyl lysine isopeptide (Lys-Gly) (interchain with G-Cter in SUMO). The tract at residues 591–610 (ESGRSDRAFRCTAGTNTESI) is disordered.

The protein belongs to the papillomaviridae E1 protein family. Can form hexamers. Interacts with E2 protein; this interaction increases E1 DNA binding specificity. Interacts with host DNA polymerase subunit POLA2. Interacts with host single stranded DNA-binding protein RPA1. Interacts with host TOP1; this interaction stimulates the enzymatic activity of TOP1. Phosphorylated. Post-translationally, sumoylated.

The protein resides in the host nucleus. The catalysed reaction is Couples ATP hydrolysis with the unwinding of duplex DNA by translocating in the 3'-5' direction.. The enzyme catalyses ATP + H2O = ADP + phosphate + H(+). In terms of biological role, ATP-dependent DNA 3'-5' helicase required for initiation of viral DNA replication. It forms a complex with the viral E2 protein. The E1-E2 complex binds to the replication origin which contains binding sites for both proteins. During the initial step, a dimer of E1 interacts with a dimer of protein E2 leading to a complex that binds the viral origin of replication with high specificity. Then, a second dimer of E1 displaces the E2 dimer in an ATP-dependent manner to form the E1 tetramer. Following this, two E1 monomers are added to each half of the site, which results in the formation of two E1 trimers on the viral ori. Subsequently, two hexamers will be created. The double hexamer acts as a bi-directional helicase machinery and unwinds the viral DNA and then recruits the host DNA polymerase to start replication. In Human papillomavirus type 60, this protein is Replication protein E1.